A 219-amino-acid polypeptide reads, in one-letter code: Thiopurine S-methyltransferase (219 aa).

S-adenosyl-L-methionine-binding residues include Trp-10, Leu-45, Glu-66, and Arg-123.

Belongs to the class I-like SAM-binding methyltransferase superfamily. TPMT family.

It is found in the cytoplasm. It carries out the reaction S-adenosyl-L-methionine + a thiopurine = S-adenosyl-L-homocysteine + a thiopurine S-methylether.. The protein is Thiopurine S-methyltransferase of Shewanella frigidimarina (strain NCIMB 400).